Consider the following 878-residue polypeptide: Pyruvate dehydrogenase phosphatase regulatory subunit, mitochondrial (878 aa).

The transit peptide at 1-93 (MLYRLLSIVQ…CAGILSTARH (93 aa)) directs the protein to the mitochondrion.

The protein belongs to the GcvT family. In terms of assembly, heterodimer of a catalytic (PDP1) and a regulatory (PDPR) subunit.

It localises to the mitochondrion matrix. Decreases the sensitivity of PDP1 to magnesium ions, and this inhibition is reversed by the polyamine spermine. The polypeptide is Pyruvate dehydrogenase phosphatase regulatory subunit, mitochondrial (Pdpr) (Mus musculus (Mouse)).